A 61-amino-acid chain; its full sequence is Ferredoxin (61 aa).

Residues 2–28 (LYITEECTYCGACEPECPTNAISAGSE) form the 4Fe-4S ferredoxin-type domain. The [4Fe-4S] cluster site is built by Cys8, Cys11, Cys14, Cys18, Cys37, Cys40, Cys49, and Cys53.

It depends on [4Fe-4S] cluster as a cofactor.

Its function is as follows. Ferredoxins are iron-sulfur proteins that transfer electrons in a wide variety of metabolic reactions. The polypeptide is Ferredoxin (Chlorobaculum thiosulfatiphilum (Chlorobium limicola f.sp. thiosulfatophilum)).